The chain runs to 426 residues: Serine--tRNA ligase (426 aa).

233 to 235 provides a ligand contact to L-serine; sequence TAE. 264-266 serves as a coordination point for ATP; that stretch reads RSE. Residue E287 coordinates L-serine. 351–354 provides a ligand contact to ATP; that stretch reads EISS. S387 is an L-serine binding site.

The protein belongs to the class-II aminoacyl-tRNA synthetase family. Type-1 seryl-tRNA synthetase subfamily. In terms of assembly, homodimer. The tRNA molecule binds across the dimer.

The protein localises to the cytoplasm. The catalysed reaction is tRNA(Ser) + L-serine + ATP = L-seryl-tRNA(Ser) + AMP + diphosphate + H(+). The enzyme catalyses tRNA(Sec) + L-serine + ATP = L-seryl-tRNA(Sec) + AMP + diphosphate + H(+). It participates in aminoacyl-tRNA biosynthesis; selenocysteinyl-tRNA(Sec) biosynthesis; L-seryl-tRNA(Sec) from L-serine and tRNA(Sec): step 1/1. Functionally, catalyzes the attachment of serine to tRNA(Ser). Is also able to aminoacylate tRNA(Sec) with serine, to form the misacylated tRNA L-seryl-tRNA(Sec), which will be further converted into selenocysteinyl-tRNA(Sec). The chain is Serine--tRNA ligase from Pseudomonas syringae pv. tomato (strain ATCC BAA-871 / DC3000).